Reading from the N-terminus, the 238-residue chain is Tetraspanin-4 (238 aa).

Topologically, residues Met1–Met13 are cytoplasmic. A helical transmembrane segment spans residues Phe14–Leu34. Over Ala35 to Asn55 the chain is Extracellular. Residues Leu56–Ile76 form a helical membrane-spanning segment. The Cytoplasmic portion of the chain corresponds to Lys77–Thr85. The helical transmembrane segment at Phe86–Ala106 threads the bilayer. Over Tyr107 to Asn201 the chain is Extracellular. Asn152 and Asn161 each carry an N-linked (GlcNAc...) asparagine glycan. The helical transmembrane segment at Leu202–Phe222 threads the bilayer. Over Ala223 to Ala238 the chain is Cytoplasmic.

Belongs to the tetraspanin (TM4SF) family. As to quaternary structure, forms a complex with integrins. Interacts with HRH4. As to expression, expressed in multiple tissues but is absent in brain, lymphoid cells, and platelets.

Its subcellular location is the cell membrane. Structural component of specialized membrane microdomains known as tetraspanin-enriched microdomains (TERMs), which act as platforms for receptor clustering and signaling. Plays an essential role in migrasome formation and migration on retracting fibers at the rear end of migrating cells. Migrasomes are cellular organelles that form as large vesicle-like structures on retraction fibers of migrating cells. Mechanistically, acts as a membrane curvature sensor and participates in stabilizing the migrasome structure in a late stage of biogenesis. May also play a regulatory role for the histamine H4 receptor/HRH4 without affecting histamine binding to HRH4 or signaling. The protein is Tetraspanin-4 (TSPAN4) of Homo sapiens (Human).